The primary structure comprises 236 residues: Large ribosomal subunit protein eL6 (236 aa).

The protein belongs to the eukaryotic ribosomal protein eL6 family.

In Dictyostelium discoideum (Social amoeba), this protein is Large ribosomal subunit protein eL6 (rpl6).